We begin with the raw amino-acid sequence, 200 residues long: NADH-quinone oxidoreductase subunit C (200 aa).

This sequence belongs to the complex I 30 kDa subunit family. NDH-1 is composed of 14 different subunits. Subunits NuoB, C, D, E, F, and G constitute the peripheral sector of the complex.

The protein resides in the cell inner membrane. It carries out the reaction a quinone + NADH + 5 H(+)(in) = a quinol + NAD(+) + 4 H(+)(out). NDH-1 shuttles electrons from NADH, via FMN and iron-sulfur (Fe-S) centers, to quinones in the respiratory chain. The immediate electron acceptor for the enzyme in this species is believed to be ubiquinone. Couples the redox reaction to proton translocation (for every two electrons transferred, four hydrogen ions are translocated across the cytoplasmic membrane), and thus conserves the redox energy in a proton gradient. The protein is NADH-quinone oxidoreductase subunit C of Chelativorans sp. (strain BNC1).